A 116-amino-acid chain; its full sequence is Large ribosomal subunit protein uL18 (116 aa).

Belongs to the universal ribosomal protein uL18 family. As to quaternary structure, part of the 50S ribosomal subunit; part of the 5S rRNA/L5/L18/L25 subcomplex. Contacts the 5S and 23S rRNAs.

This is one of the proteins that bind and probably mediate the attachment of the 5S RNA into the large ribosomal subunit, where it forms part of the central protuberance. This is Large ribosomal subunit protein uL18 from Teredinibacter turnerae (strain ATCC 39867 / T7901).